Reading from the N-terminus, the 570-residue chain is KH homology domain-containing protein 4 (570 aa).

The disordered stretch occupies residues 1–29; it reads MSFGVPHSGGSRRSKWDQAGPDADAGSAP. KH domains lie at 77–157 and 210–292; these read DDLV…RIKE and VFVG…NLLQ. Residues 391–407 are compositionally biased toward pro residues; sequence PPTAPVPPKLTAPPNPP. Disordered stretches follow at residues 391-410, 438-500, and 512-570; these read PPTA…PQKR, AGMP…EPQV, and GDSS…WMAP. The required for nuclear retention stretch occupies residues 427–497; that stretch reads QHGPIHMTNL…ESPSAPSLLE (71 aa). Positions 553-562 are enriched in low complexity; the sequence is TQTAPQPTQQ.

The protein belongs to the KHDC4 family. Interacts with PRPF19.

The protein localises to the nucleus. The protein resides in the cytoplasm. RNA-binding protein involved in pre-mRNA splicing. Interacts with the PRP19C/Prp19 complex/NTC/Nineteen complex which is part of the spliceosome. Involved in regulating splice site selection. Binds preferentially RNA with A/C rich sequences and poly-C stretches. The sequence is that of KH homology domain-containing protein 4 (khdc4) from Danio rerio (Zebrafish).